Consider the following 164-residue polypeptide: uncharacterized protein (164 aa).

The helical transmembrane segment at 46–66 (FIRPNIYLIIFIIIVLLLLYY) threads the bilayer. A coiled-coil region spans residues 72–137 (KADKEKEKLE…YNLNKENLRE (66 aa)). The segment covering 76-91 (EKEKLEDTDKEFDKST) has biased composition (basic and acidic residues). A disordered region spans residues 76–114 (EKEKLEDTDKEFDKSTNNDTNSKKIYHRQKNSKTLNSSK).

The protein resides in the membrane. This is an uncharacterized protein from Acanthamoeba polyphaga mimivirus (APMV).